Consider the following 354-residue polypeptide: Membrane progestin receptor alpha-B (354 aa).

At 1 to 76 (MATVVMEQIG…LTLFQRHNES (76 aa)) the chain is on the cytoplasmic side. The helical transmembrane segment at 77-97 (VNVWTHLLASLIILVKFQELS) threads the bilayer. At 98–110 (ETVDFLRDPHAQP) the chain is on the extracellular side. Residues 111-131 (MFILLLAAFTYLGCSALAHLL) traverse the membrane as a helical segment. Residues 132–141 (SAKSEISHYT) are Cytoplasmic-facing. Residues 142-162 (FYFLDYVGVAVYQYGSALAHF) traverse the membrane as a helical segment. The Extracellular segment spans residues 163 to 175 (YYVVEEEWHAQVR). Residues 176–196 (TFFLPASAFLAWLSCTGCCYG) form a helical membrane-spanning segment. The Cytoplasmic segment spans residues 197 to 244 (KYASPKLPKFVHKLFQVVPSGLAYCLDISPVLHRIYRCYSSEHWCADQ). The chain crosses the membrane as a helical span at residues 245-265 (AVVYHCYQVLFFLISAYFFSY). Topologically, residues 266–277 (PHPERWFPGRCD) are extracellular. The chain crosses the membrane as a helical span at residues 278–298 (FIGQGHQIFHVFLVLCTLVQI). At 299–318 (EAVRLDYTERRRLYEHLHGD) the chain is on the cytoplasmic side. The chain crosses the membrane as a helical span at residues 319-339 (LAHDAVALFIFTACCSALTAF). Residues 340-354 (YVRKRVKTYLEEKQE) are Extracellular-facing.

The protein belongs to the ADIPOR family.

The protein localises to the cell membrane. Steroid membrane receptor. Signals upon progestin binding, resulting in rapid activation of MAPK and down-regulation of adenylyl cyclase activity. Interacts with steroids with varying degrees of affinity, showing specificity for activation by the maturation-inducing steroid (MIS) 4-pregnen-17,20beta-diol-3-one (17,20beta-DHP). Capable of mediating progestin-induced oocyte maturation. In Danio rerio (Zebrafish), this protein is Membrane progestin receptor alpha-B (paqr7b).